Here is a 438-residue protein sequence, read N- to C-terminus: Transposon Ty2-GR1 Gag polyprotein (438 aa).

Composition is skewed to polar residues over residues 1–11 (MESQQLHQNPH), 19–39 (ASVT…SASN), and 49–60 (KVNSQQETTPGT). Disordered regions lie at residues 1–86 (MESQ…GQYQ), 360–403 (HSEY…ATSS), and 418–438 (VSSQ…TERI). An RNA-binding region spans residues 295–397 (ENNINVSDRL…SSKPRAAKAH (103 aa)). The span at 369–381 (TSPNTTNTKVTTR) shows a compositional bias: low complexity.

In terms of assembly, homotrimer.

It is found in the cytoplasm. Capsid protein (CA) is the structural component of the virus-like particle (VLP), forming the shell that encapsulates the retrotransposons dimeric RNA genome. The particles are assembled from trimer-clustered units and there are holes in the capsid shells that allow for the diffusion of macromolecules. CA also has nucleocapsid-like chaperone activity, promoting primer tRNA(i)-Met annealing to the multipartite primer-binding site (PBS), dimerization of Ty2 RNA and initiation of reverse transcription. This is Transposon Ty2-GR1 Gag polyprotein (TY2A-GR1) from Saccharomyces cerevisiae (strain ATCC 204508 / S288c) (Baker's yeast).